The following is a 690-amino-acid chain: Glycine--tRNA ligase beta subunit (690 aa).

The protein belongs to the class-II aminoacyl-tRNA synthetase family. As to quaternary structure, tetramer of two alpha and two beta subunits.

Its subcellular location is the cytoplasm. The catalysed reaction is tRNA(Gly) + glycine + ATP = glycyl-tRNA(Gly) + AMP + diphosphate. This chain is Glycine--tRNA ligase beta subunit, found in Desulfitobacterium hafniense (strain DSM 10664 / DCB-2).